A 101-amino-acid polypeptide reads, in one-letter code: Chaperone modulatory protein CbpM (101 aa).

It belongs to the CbpM family.

Its function is as follows. Interacts with CbpA and inhibits both the DnaJ-like co-chaperone activity and the DNA binding activity of CbpA. Together with CbpA, modulates the activity of the DnaK chaperone system. Does not inhibit the co-chaperone activity of DnaJ. This chain is Chaperone modulatory protein CbpM, found in Escherichia coli (strain K12 / MC4100 / BW2952).